The primary structure comprises 431 residues: Glutamate-1-semialdehyde 2,1-aminomutase 2 (431 aa).

Position 268 is an N6-(pyridoxal phosphate)lysine (Lys268).

This sequence belongs to the class-III pyridoxal-phosphate-dependent aminotransferase family. HemL subfamily. In terms of assembly, homodimer. The cofactor is pyridoxal 5'-phosphate.

Its subcellular location is the cytoplasm. The enzyme catalyses (S)-4-amino-5-oxopentanoate = 5-aminolevulinate. The protein operates within porphyrin-containing compound metabolism; protoporphyrin-IX biosynthesis; 5-aminolevulinate from L-glutamyl-tRNA(Glu): step 2/2. In Anoxybacillus flavithermus (strain DSM 21510 / WK1), this protein is Glutamate-1-semialdehyde 2,1-aminomutase 2.